The primary structure comprises 264 residues: Indole-3-glycerol phosphate synthase (264 aa).

It belongs to the TrpC family.

The catalysed reaction is 1-(2-carboxyphenylamino)-1-deoxy-D-ribulose 5-phosphate + H(+) = (1S,2R)-1-C-(indol-3-yl)glycerol 3-phosphate + CO2 + H2O. It participates in amino-acid biosynthesis; L-tryptophan biosynthesis; L-tryptophan from chorismate: step 4/5. The polypeptide is Indole-3-glycerol phosphate synthase (Rhizorhabdus wittichii (strain DSM 6014 / CCUG 31198 / JCM 15750 / NBRC 105917 / EY 4224 / RW1) (Sphingomonas wittichii)).